Here is a 502-residue protein sequence, read N- to C-terminus: Lysine--tRNA ligase (502 aa).

The Mg(2+) site is built by Glu-412 and Glu-419.

The protein belongs to the class-II aminoacyl-tRNA synthetase family. As to quaternary structure, homodimer. It depends on Mg(2+) as a cofactor.

The protein localises to the cytoplasm. It catalyses the reaction tRNA(Lys) + L-lysine + ATP = L-lysyl-tRNA(Lys) + AMP + diphosphate. The sequence is that of Lysine--tRNA ligase from Nitrosomonas europaea (strain ATCC 19718 / CIP 103999 / KCTC 2705 / NBRC 14298).